A 342-amino-acid chain; its full sequence is MSGVPFPSRVIGDLDYSNLLNIGQEEAIRCVLNAYPNIGLEATNLGRARRIVQRALNDNGMDGNKVMLAYTSNLISSGLRDTFACLARENRIGAVVTTAGGVEEDVIKCLGDTLVGDFALNDHALRNNGLNRVGNLLVPNDNYRNFEDFFVPLLRRLHEQQRDSRWTTKTTPSQIIAEIGAALESVRPNDCGSSLIYWCYRNDIPVFSPAFTDGSMGDMIYFYNYSRKGLVVDPVPDVRRLRQLGCKSTNVGRITCIVLGAGLPKHHLLRNVQADAVVYVTTGSDADGCESSCNVMADRANGLLSPNCDVVRVHGDATIISPLLLLRSSDGKEKVGVREDGN.

NAD(+)-binding positions include 72–76 (SNLIS), 98–100 (TAG), Glu-104, Asp-213, 282–283 (TG), and 316–317 (DA).

It belongs to the deoxyhypusine synthase family. As to quaternary structure, heterotetramer formed by a homodimer of the non-catalytic regulatory subunit DHSp and a homodimer of the catalytic subunit DHSc where DHSc appears to bind spermidine and DHSp appears to bind NAD(+).

It participates in protein modification; eIF5A hypusination. Functionally, required for the activation and stability of deoxyhypusine synthase DHSc. Required for cell growth and survival. This Trypanosoma brucei brucei (strain 927/4 GUTat10.1) protein is Deoxyhypusine synthase regulatory subunit.